A 161-amino-acid polypeptide reads, in one-letter code: MTQLTHFDTAGQAHMVDVGDKASTHRVAVATGTITMLPDTFALVRDGNAKKGDVLGIARVAAIMATKRTADLIPLCHPIGLTKVAVDFALDEAGSSITCTVRTETRGQTGVEMEALTGVQVALLTIYDMCKAVDRGMVMGNVKLLEKHGGKSGDWVSTPAG.

Substrate is bound by residues 75 to 77 (LCH) and 113 to 114 (ME). Asp-128 is an active-site residue.

The protein belongs to the MoaC family. Homohexamer; trimer of dimers.

It carries out the reaction (8S)-3',8-cyclo-7,8-dihydroguanosine 5'-triphosphate = cyclic pyranopterin phosphate + diphosphate. It functions in the pathway cofactor biosynthesis; molybdopterin biosynthesis. Catalyzes the conversion of (8S)-3',8-cyclo-7,8-dihydroguanosine 5'-triphosphate to cyclic pyranopterin monophosphate (cPMP). The chain is Cyclic pyranopterin monophosphate synthase from Cupriavidus pinatubonensis (strain JMP 134 / LMG 1197) (Cupriavidus necator (strain JMP 134)).